A 1408-amino-acid chain; its full sequence is TSET complex member tstA (1408 aa).

Disordered regions lie at residues 259-347, 998-1055, and 1091-1139; these read FWPT…SIIA, QQSS…AVGS, and SSSS…TNLN. A compositionally biased stretch (low complexity) spans 266–308; sequence NNNNNNNNQQINNNNNNNNNNNNNNNNNNNNNNNNNNNNNQNN. The segment covering 309–318 has biased composition (polar residues); it reads LINGISSMNL. Low complexity-rich tracts occupy residues 319-347 and 998-1051; these read SSITGTTTTTTTTGNSPITSPTSPTSIIA and QQSS…ISTS.

It belongs to the TPLATE family. Component of the TSET complex, a heterohexamer composed of tstA, tstB, tstC, tstD, tstE and tstF, which may act in plasma membrane turnover. tstA, tstB, tstC and tstD are likely to be the core complex members with tstE and tstF acting as associated scaffold proteins.

The protein is TSET complex member tstA of Dictyostelium discoideum (Social amoeba).